The following is a 279-amino-acid chain: Urease accessory protein UreD (279 aa).

Belongs to the UreD family. In terms of assembly, ureD, UreF and UreG form a complex that acts as a GTP-hydrolysis-dependent molecular chaperone, activating the urease apoprotein by helping to assemble the nickel containing metallocenter of UreC. The UreE protein probably delivers the nickel.

It localises to the cytoplasm. Its function is as follows. Required for maturation of urease via the functional incorporation of the urease nickel metallocenter. This is Urease accessory protein UreD from Pseudomonas fluorescens (strain Pf0-1).